A 1035-amino-acid polypeptide reads, in one-letter code: MAVTLDKEAYYRRIKRFFGSWKKGDDEFANVDAIVVSVGVDEEIVYAKSTALQTWLFGYELTDTIMVFCEEKILFMASKKKVEFLKQIANTKGNENANGTPAITLLVREKQNESNKGNFDKMIEAIKVSKKGKRIGVFIKDKFPGDFMKSWYDILNKESFEKVDISASVAYTIAVKEEGELNLMKKAASITSDVFSKFFKDRVMEIVDADEKVRHGKLAESVEKAIEDKKYLGGTDPSTIEMCYPPIIQSGGNYNLKFSVVSDKNHMHFGAITCALGIRYKSYCSNLVRTLMVDPTQEMQENYNFLLQLQEELLKELKHGAKICDAYQVIMDQVKKQKPDLMSKITKTLGFAMGIEFREGSLVINNKNQYKLKKGMVFSVHLGLAELNNKMGKKPEEKTYALFVGDTVLVNEEGAATVLTNVKKKVKNVGIFLKKEDEEEEEEEKDEAEDLLGRGSRAAALLTERTRNEMTAEEKRRTHQKELATQLNDEAKRRLTEQKGGQQTMKARKSNVSYKNASQVPKEPELREMKLYIDKKYETVIMPVFGISTPFHIATIKNISMSVEGDYTYLRINFFCPGSALGRNEGNIFPNPEATFVKEITYRASNVKTPGDPSVPSLNLQNAFRIIKEVQKRYKTREAEEKEKEGIVKQDSLVINLNRSNPKLKDLYIRPNIAQKRMQGSLEAHVNGFRFTSVRGDKVDILYNNIKHALFQPCDGEMIIVLHFHLKNAIMFGKKRHTDVQFYTEVGEITTDLGKHQHMHDRDDLYAEQLEREMRHKLKTAFKNFIEKVESLTKEDLEFEIPFRDLGFNGAPYRSTCLLQPTSSSLVNTTEWPPFVVTLDEVELVHFERVQFHLKNFDMVIVYKEYGKKVTMINAIPMASLDPIKEWLNSCDIKYTEGVQSLNWTKIMKTIVDDPEGFFEQGGWSFLEPDGEGSDAAEGDSESELDDETFNPSEDEEEEEEDSDEDYSDETEDSVDSEESADSEEESGKDWDELEEEARKADRESLYEEVEEQKSGNRKRKGHAPLPNPSKKRKK.

Positions 432 to 500 (FLKKEDEEEE…AKRRLTEQKG (69 aa)) form a coiled coil. Disordered stretches follow at residues 491-520 (AKRR…ASQV) and 920-1035 (EQGG…KRKK). Polar residues predominate over residues 499-519 (KGGQQTMKARKSNVSYKNASQ). The span at 929–985 (PDGEGSDAAEGDSESELDDETFNPSEDEEEEEEDSDEDYSDETEDSVDSEESADSEE) shows a compositional bias: acidic residues. A compositionally biased stretch (basic and acidic residues) spans 986 to 1006 (ESGKDWDELEEEARKADRESL).

Belongs to the peptidase M24 family. SPT16 subfamily. As to quaternary structure, component of the FACT complex (also called the DUF complex), a stable heterodimer of ssrp1 and supt16h. May also be a component of a ck2-spt16-ssrp1 complex composed of ssrp1, supt16h, csnk2a1, csnk2a2 and csnk2b. The FACT complex may also interact with vcp.

The protein localises to the nucleus. It is found in the chromosome. Component of the FACT complex, a general chromatin factor that acts to reorganize nucleosomes. The FACT complex is involved in multiple processes that require DNA as a template such as mRNA elongation, DNA replication and DNA repair. During transcription elongation the FACT complex acts as a histone chaperone that both destabilizes and restores nucleosomal structure. It facilitates the passage of RNA polymerase II and transcription by promoting the dissociation of one histone H2A-H2B dimer from the nucleosome, then subsequently promotes the reestablishment of the nucleosome following the passage of RNA polymerase II. The sequence is that of FACT complex subunit SPT16 (supt16h) from Xenopus laevis (African clawed frog).